A 121-amino-acid polypeptide reads, in one-letter code: Dihydroneopterin aldolase (121 aa).

Residues Glu25 and Met114 each coordinate substrate.

This sequence belongs to the archaeal dihydroneopterin aldolase family. Homotetramer.

The catalysed reaction is 7,8-dihydroneopterin = 6-hydroxymethyl-7,8-dihydropterin + glycolaldehyde. It functions in the pathway cofactor biosynthesis; 5,6,7,8-tetrahydromethanopterin biosynthesis. Functionally, catalyzes the conversion of 7,8-dihydroneopterin (H2Neo) to 6-hydroxymethyl-7,8-dihydropterin (6-HMD). The polypeptide is Dihydroneopterin aldolase (Methanocaldococcus jannaschii (strain ATCC 43067 / DSM 2661 / JAL-1 / JCM 10045 / NBRC 100440) (Methanococcus jannaschii)).